Consider the following 300-residue polypeptide: Succinate--CoA ligase [ADP-forming] subunit alpha (300 aa).

CoA is bound by residues 17 to 20, lysine 43, and 96 to 98; these read TGST and ITE. Substrate is bound at residue tyrosine 159. The Tele-phosphohistidine intermediate role is filled by histidine 247.

It belongs to the succinate/malate CoA ligase alpha subunit family. As to quaternary structure, heterotetramer of two alpha and two beta subunits.

It carries out the reaction succinate + ATP + CoA = succinyl-CoA + ADP + phosphate. The enzyme catalyses GTP + succinate + CoA = succinyl-CoA + GDP + phosphate. It participates in carbohydrate metabolism; tricarboxylic acid cycle; succinate from succinyl-CoA (ligase route): step 1/1. Succinyl-CoA synthetase functions in the citric acid cycle (TCA), coupling the hydrolysis of succinyl-CoA to the synthesis of either ATP or GTP and thus represents the only step of substrate-level phosphorylation in the TCA. The alpha subunit of the enzyme binds the substrates coenzyme A and phosphate, while succinate binding and nucleotide specificity is provided by the beta subunit. This is Succinate--CoA ligase [ADP-forming] subunit alpha from Bacillus subtilis (strain 168).